A 394-amino-acid polypeptide reads, in one-letter code: GTPase Era, mitochondrial (394 aa).

An Era-type G domain is found at 32–280 (KCLQLAVIGA…RDHLMSISPQ (249 aa)). The G1 stretch occupies residues 40–47 (GAPNVGKS). 40-47 (GAPNVGKS) is a binding site for GTP. The segment at 66–70 (DTTTR) is G2. The interval 87–90 (DSPG) is G3. GTP is bound by residues 87–91 (DSPGA) and 160–163 (NKID). The segment at 160-163 (NKID) is G4. Residues 259-261 (VSS) form a G5 region.

Belongs to the TRAFAC class TrmE-Era-EngA-EngB-Septin-like GTPase superfamily. Era GTPase family.

The protein localises to the mitochondrion matrix. It localises to the mitochondrion inner membrane. Functionally, probable GTPase that plays a role in the mitochondrial ribosomal small subunit assembly. Specifically binds the 12S mitochondrial rRNA (12S mt-rRNA) to a 33 nucleotide section delineating the 3' terminal stem-loop region. May act as a chaperone that protects the 12S mt-rRNA on the 28S mitoribosomal subunit during ribosomal small subunit assembly. May play a role in positively regulating mitochondrial function. Plays a role in fertility. This chain is GTPase Era, mitochondrial, found in Caenorhabditis elegans.